The chain runs to 518 residues: Efflux pump terJ (518 aa).

The chain crosses the membrane as a helical span at residues 43 to 63 (IAFIVVVCMAQLVSQAGLGQV). Asn-79 is a glycosylation site (N-linked (GlcNAc...) asparagine). 12 helical membrane passes run 82 to 102 (QLSWFPAAYSLTVGTFILGAG), 112 to 132 (LLFTAGYFWLAIWTLVAAFAE), 135 to 155 (GPVFFCCCRVLQGIGPAFLLP), 177 to 197 (AFGSTAPSGFIFGGLVSALAA), 204 to 224 (WGFWFMAILEAVCGIAAIFWV), 244 to 264 (IAGCVTGISGLLLFNVALNMA), 272 to 292 (PYIYILLIASLVFFGLFGYIE), 311 to 331 (FVLATLACGWAAFGVWVFYGW), 339 to 359 (GISPLFACLQFSPAAISGFVA), 364 to 384 (GLILQKLPASVVMMISAAAFC), 400 to 420 (WAQLFVSIIVMPWGMEMSFPA), and 439 to 459 (SLVATIMNYAISLGLGFGAIV). Asn-466 carries N-linked (GlcNAc...) asparagine glycosylation. Residues 477-497 (AWYLGVGLAASGIILTMFFAL) form a helical membrane-spanning segment.

Belongs to the major facilitator superfamily.

It is found in the cell membrane. Its function is as follows. Efflux pump that might be required for efficient secretion of terrein or other secondary metabolies produced by the terrein genne cluster. The polypeptide is Efflux pump terJ (Aspergillus terreus (strain NIH 2624 / FGSC A1156)).